Reading from the N-terminus, the 255-residue chain is Imidazole glycerol phosphate synthase subunit HisF (255 aa).

Catalysis depends on residues aspartate 11 and aspartate 130.

The protein belongs to the HisA/HisF family. Heterodimer of HisH and HisF.

It localises to the cytoplasm. The catalysed reaction is 5-[(5-phospho-1-deoxy-D-ribulos-1-ylimino)methylamino]-1-(5-phospho-beta-D-ribosyl)imidazole-4-carboxamide + L-glutamine = D-erythro-1-(imidazol-4-yl)glycerol 3-phosphate + 5-amino-1-(5-phospho-beta-D-ribosyl)imidazole-4-carboxamide + L-glutamate + H(+). It participates in amino-acid biosynthesis; L-histidine biosynthesis; L-histidine from 5-phospho-alpha-D-ribose 1-diphosphate: step 5/9. Functionally, IGPS catalyzes the conversion of PRFAR and glutamine to IGP, AICAR and glutamate. The HisF subunit catalyzes the cyclization activity that produces IGP and AICAR from PRFAR using the ammonia provided by the HisH subunit. This is Imidazole glycerol phosphate synthase subunit HisF from Campylobacter lari (strain RM2100 / D67 / ATCC BAA-1060).